Here is a 542-residue protein sequence, read N- to C-terminus: Malolactic enzyme (542 aa).

Catalysis depends on tyrosine 92, which acts as the Proton donor. The Proton acceptor role is filled by lysine 165. Lysine 165 serves as a coordination point for substrate. 3 residues coordinate Mn(2+): glutamate 236, aspartate 237, and aspartate 260. NAD(+) contacts are provided by residues 293–296, asparagine 405, and asparagine 450; that span reads AGTA. Asparagine 450 provides a ligand contact to substrate.

It belongs to the malic enzymes family. In terms of assembly, homodimer. Mn(2+) serves as cofactor. NAD(+) is required as a cofactor.

The catalysed reaction is (S)-malate + H(+) = (S)-lactate + CO2. Oxamate, fructose-1,6-diphosphate and L-lactate act as non-competitive inhibitors, whereas succinate, citrate and tartrate isomers produce a competitive inhibition. In terms of biological role, involved in the malolactic fermentation (MLF) of wine, which results in a natural decrease in acidity and favorable changes in wine flavors. Catalyzes the decarboxylation of L-malate to L-lactate. The chain is Malolactic enzyme (mleS) from Leuconostoc mesenteroides.